The primary structure comprises 122 residues: Large ribosomal subunit protein uL14 (122 aa).

It belongs to the universal ribosomal protein uL14 family. Part of the 50S ribosomal subunit. Forms a cluster with proteins L3 and L19. In the 70S ribosome, L14 and L19 interact and together make contacts with the 16S rRNA in bridges B5 and B8.

Binds to 23S rRNA. Forms part of two intersubunit bridges in the 70S ribosome. This is Large ribosomal subunit protein uL14 from Desulfovibrio desulfuricans (strain ATCC 27774 / DSM 6949 / MB).